The primary structure comprises 285 residues: NADPH-dependent 7-cyano-7-deazaguanine reductase (285 aa).

80–82 (VES) is a substrate binding site. Residue 82–83 (SK) coordinates NADPH. The active-site Thioimide intermediate is the cysteine 191. Aspartate 198 acts as the Proton donor in catalysis. A substrate-binding site is contributed by 231 to 232 (HE). Residue 260-261 (RG) participates in NADPH binding.

It belongs to the GTP cyclohydrolase I family. QueF type 2 subfamily. Homodimer.

It localises to the cytoplasm. It carries out the reaction 7-aminomethyl-7-carbaguanine + 2 NADP(+) = 7-cyano-7-deazaguanine + 2 NADPH + 3 H(+). It participates in tRNA modification; tRNA-queuosine biosynthesis. Catalyzes the NADPH-dependent reduction of 7-cyano-7-deazaguanine (preQ0) to 7-aminomethyl-7-deazaguanine (preQ1). This chain is NADPH-dependent 7-cyano-7-deazaguanine reductase, found in Psychrobacter cryohalolentis (strain ATCC BAA-1226 / DSM 17306 / VKM B-2378 / K5).